Reading from the N-terminus, the 1047-residue chain is Atrial natriuretic peptide receptor 2 (1047 aa).

The signal sequence occupies residues 1–16 (MALPSLLLVVAALAGG). At 17 to 458 (VRPPGARNLT…DKTPLSTLAI (442 aa)) the chain is on the extracellular side. Asn24 and Asn35 each carry an N-linked (GlcNAc...) asparagine glycan. Cys75 and Cys101 are oxidised to a cystine. 5 N-linked (GlcNAc...) asparagine glycosylation sites follow: Asn161, Asn195, Asn244, Asn277, and Asn349. The helical transmembrane segment at 459–478 (VALGTGVTFIMFGVSSFLIF) threads the bilayer. Residues 479–1047 (RKLMLEKELA…GEQKGPPGLL (569 aa)) are Cytoplasmic-facing. Residue Ser513 is modified to Phosphoserine. The Protein kinase domain occupies 513-786 (SRLTLSLRGS…PDFGQIKGFI (274 aa)). Position 516 is a phosphothreonine (Thr516). Phosphoserine occurs at positions 518, 522, 523, and 526. Thr529 is modified (phosphothreonine). A Guanylate cyclase domain is found at 861–991 (TIYFSDIVGF…DTVNTASRME (131 aa)).

This sequence belongs to the adenylyl cyclase class-4/guanylyl cyclase family. Post-translationally, phosphorylated. Phosphorylation of the protein kinase-like domain is required for full activation by CNP. Glycosylated. Widely expressed. Expressed in the columnar proliferating and prehypertrophic chondrocyte layers of the tibia.

The protein resides in the cell membrane. The enzyme catalyses GTP = 3',5'-cyclic GMP + diphosphate. In terms of biological role, receptor for the C-type natriuretic peptide NPPC/CNP hormone. Has guanylate cyclase activity upon binding of its ligand. May play a role in the regulation of skeletal growth. This is Atrial natriuretic peptide receptor 2 (Npr2) from Mus musculus (Mouse).